The chain runs to 418 residues: Glutamyl-tRNA reductase (418 aa).

Substrate-binding positions include 49 to 52 (TCNR), S109, 114 to 116 (EPQ), and Q120. C50 acts as the Nucleophile in catalysis. 189–194 (GAGETI) contacts NADP(+).

Belongs to the glutamyl-tRNA reductase family. As to quaternary structure, homodimer.

The enzyme catalyses (S)-4-amino-5-oxopentanoate + tRNA(Glu) + NADP(+) = L-glutamyl-tRNA(Glu) + NADPH + H(+). It functions in the pathway porphyrin-containing compound metabolism; protoporphyrin-IX biosynthesis; 5-aminolevulinate from L-glutamyl-tRNA(Glu): step 1/2. In terms of biological role, catalyzes the NADPH-dependent reduction of glutamyl-tRNA(Glu) to glutamate 1-semialdehyde (GSA). In Shigella flexneri, this protein is Glutamyl-tRNA reductase.